Consider the following 106-residue polypeptide: Nucleoid-associated protein DP1429 (106 aa).

Belongs to the YbaB/EbfC family. As to quaternary structure, homodimer.

It is found in the cytoplasm. The protein resides in the nucleoid. Functionally, binds to DNA and alters its conformation. May be involved in regulation of gene expression, nucleoid organization and DNA protection. In Desulfotalea psychrophila (strain LSv54 / DSM 12343), this protein is Nucleoid-associated protein DP1429.